Here is a 265-residue protein sequence, read N- to C-terminus: Hydroxyethylthiazole kinase (265 aa).

Methionine 50 contacts substrate. Residues arginine 125 and threonine 171 each contribute to the ATP site. Position 198 (glycine 198) interacts with substrate.

The protein belongs to the Thz kinase family. Mg(2+) is required as a cofactor.

It carries out the reaction 5-(2-hydroxyethyl)-4-methylthiazole + ATP = 4-methyl-5-(2-phosphooxyethyl)-thiazole + ADP + H(+). Its pathway is cofactor biosynthesis; thiamine diphosphate biosynthesis; 4-methyl-5-(2-phosphoethyl)-thiazole from 5-(2-hydroxyethyl)-4-methylthiazole: step 1/1. Its function is as follows. Catalyzes the phosphorylation of the hydroxyl group of 4-methyl-5-beta-hydroxyethylthiazole (THZ). This Salmonella schwarzengrund (strain CVM19633) protein is Hydroxyethylthiazole kinase.